Consider the following 306-residue polypeptide: Tryptophan 2,3-dioxygenase (306 aa).

The disordered stretch occupies residues 1-29 (MQPPGDDAAPRCPFAGAHAPDAPHVPEAA). Residues 75–79 (FIIQH), tyrosine 137, and arginine 141 contribute to the substrate site. Histidine 264 contributes to the heme binding site. Threonine 278 lines the substrate pocket.

Belongs to the tryptophan 2,3-dioxygenase family. As to quaternary structure, homotetramer. Requires heme as cofactor.

It catalyses the reaction L-tryptophan + O2 = N-formyl-L-kynurenine. Its pathway is amino-acid degradation; L-tryptophan degradation via kynurenine pathway; L-kynurenine from L-tryptophan: step 1/2. In terms of biological role, heme-dependent dioxygenase that catalyzes the oxidative cleavage of the L-tryptophan (L-Trp) pyrrole ring and converts L-tryptophan to N-formyl-L-kynurenine. Catalyzes the oxidative cleavage of the indole moiety. In Burkholderia mallei (strain NCTC 10247), this protein is Tryptophan 2,3-dioxygenase.